A 305-amino-acid polypeptide reads, in one-letter code: UDP-3-O-acyl-N-acetylglucosamine deacetylase (305 aa).

His-79, His-238, and Asp-242 together coordinate Zn(2+). His-265 acts as the Proton donor in catalysis.

The protein belongs to the LpxC family. Requires Zn(2+) as cofactor.

It carries out the reaction a UDP-3-O-[(3R)-3-hydroxyacyl]-N-acetyl-alpha-D-glucosamine + H2O = a UDP-3-O-[(3R)-3-hydroxyacyl]-alpha-D-glucosamine + acetate. It participates in glycolipid biosynthesis; lipid IV(A) biosynthesis; lipid IV(A) from (3R)-3-hydroxytetradecanoyl-[acyl-carrier-protein] and UDP-N-acetyl-alpha-D-glucosamine: step 2/6. Functionally, catalyzes the hydrolysis of UDP-3-O-myristoyl-N-acetylglucosamine to form UDP-3-O-myristoylglucosamine and acetate, the committed step in lipid A biosynthesis. This is UDP-3-O-acyl-N-acetylglucosamine deacetylase from Vibrio campbellii (strain ATCC BAA-1116).